The following is a 379-amino-acid chain: Glutamate 5-kinase (379 aa).

Position 19 (lysine 19) interacts with ATP. Positions 59, 146, and 158 each coordinate substrate. ATP is bound at residue 178-179 (TD). The PUA domain occupies 285-363 (RGAVTVDAGA…SEFERLLGYV (79 aa)).

The protein belongs to the glutamate 5-kinase family.

Its subcellular location is the cytoplasm. It catalyses the reaction L-glutamate + ATP = L-glutamyl 5-phosphate + ADP. It functions in the pathway amino-acid biosynthesis; L-proline biosynthesis; L-glutamate 5-semialdehyde from L-glutamate: step 1/2. Functionally, catalyzes the transfer of a phosphate group to glutamate to form L-glutamate 5-phosphate. The protein is Glutamate 5-kinase of Variovorax paradoxus (strain S110).